The following is a 2108-amino-acid chain: Kinesin-like protein KIF26B (2108 aa).

Disordered regions lie at residues 1–124 and 263–287; these read MNSV…PGSD and KHGS…PTHQ. A compositionally biased stretch (basic and acidic residues) spans 40-50; sequence WYRKAYEESRA. A compositionally biased stretch (low complexity) spans 58–98; it reads GAGSALGSSGTPSPGSGTSSPSSFTGSPGPASPGIGTSSPG. Over residues 99-120 the composition is skewed to gly residues; the sequence is SLGGSPGFGTGSPGSGSGGGSS. Positions 450–801 constitute a Kinesin motor domain; the sequence is KVKVMLRICS…IQIASRVLRM (352 aa). 546 to 553 lines the ATP pocket; it reads GHAKLGKS. Disordered stretches follow at residues 805–825, 876–917, 937–1166, 1406–1504, 1519–1653, 1685–1799, and 1824–1974; these read KTKY…GRMR, SDKE…GKSE, DGSE…ESKK, EPEA…PVTD, GLAT…SSSK, AESL…ASKL, and RAGP…WVDG. Residues 1004–1046 are compositionally biased toward low complexity; it reads SHSPVPAAAPAHSPSPASPRSVPGSSSQHSASPLVQSPSLQSS. Positions 1424–1461 are enriched in basic and acidic residues; that stretch reads RESKENSAKKEMKFEDPWLKREEEVKKETAHPNEEGMM. Positions 1491–1500 are enriched in low complexity; that stretch reads SSSSGEVSAS. 2 stretches are compositionally biased toward polar residues: residues 1521–1537 and 1611–1628; these read ATQS…SSSL and RASP…SPLN. 2 stretches are compositionally biased toward low complexity: residues 1713–1730 and 1751–1763; these read SAGT…AGQS and STTK…TKSL. Residues 1781–1795 are compositionally biased toward polar residues; that stretch reads PWSTQSLSRNRSSGL. The segment covering 1824–1836 has biased composition (low complexity); the sequence is RAGPEAEARGGAL. T1855 carries the post-translational modification Phosphothreonine. 2 stretches are compositionally biased toward polar residues: residues 1866 to 1875 and 1907 to 1925; these read GHGSDNSSVL and ATGS…SSSV. Basic residues predominate over residues 1930-1948; the sequence is RSLKTPKKRSNPGSQRRRL. The segment covering 1954–1968 has biased composition (polar residues); sequence LDTSSPVRKPPNSTG. Residue S1958 is modified to Phosphoserine.

The protein belongs to the TRAFAC class myosin-kinesin ATPase superfamily. Kinesin family. KIF26 subfamily. Interacts with MYH10. Post-translationally, phosphorylation at Thr-1855 and Ser-1958 by CDKs, mainly CDK2 and CDK5, enhances the interaction with NEDD4, polyubiquitination, and subsequent proteasomal degradation. Phosphorylation occurs upon loss of interaction with microtubules. In terms of processing, polyubiquitinated by NEDD4, resulting in proteasomal degradation.

It localises to the cytoplasm. The protein localises to the cytoskeleton. In terms of biological role, essential for embryonic kidney development. Plays an important role in the compact adhesion between mesenchymal cells adjacent to the ureteric buds, possibly by interacting with MYH10. This could lead to the establishment of the basolateral integrity of the mesenchyme and the polarized expression of ITGA8, which maintains the GDNF expression required for further ureteric bud attraction. Although it seems to lack ATPase activity it is constitutively associated with microtubules. In Homo sapiens (Human), this protein is Kinesin-like protein KIF26B (KIF26B).